The following is a 467-amino-acid chain: Argininosuccinate lyase (467 aa).

It belongs to the lyase 1 family. Argininosuccinate lyase subfamily.

Its subcellular location is the cytoplasm. The enzyme catalyses 2-(N(omega)-L-arginino)succinate = fumarate + L-arginine. It participates in amino-acid biosynthesis; L-arginine biosynthesis; L-arginine from L-ornithine and carbamoyl phosphate: step 3/3. This Sinorhizobium fredii (strain NBRC 101917 / NGR234) protein is Argininosuccinate lyase.